We begin with the raw amino-acid sequence, 270 residues long: 5'-nucleotidase SurE (270 aa).

Residues D8, D9, S40, and N98 each contribute to the a divalent metal cation site.

The protein belongs to the SurE nucleotidase family. The cofactor is a divalent metal cation.

It is found in the cytoplasm. It catalyses the reaction a ribonucleoside 5'-phosphate + H2O = a ribonucleoside + phosphate. Functionally, nucleotidase that shows phosphatase activity on nucleoside 5'-monophosphates. This chain is 5'-nucleotidase SurE, found in Cyanothece sp. (strain PCC 7425 / ATCC 29141).